We begin with the raw amino-acid sequence, 546 residues long: Chaperonin GroEL (546 aa).

Residues threonine 30–proline 33, lysine 51, aspartate 87–threonine 91, glycine 415, and aspartate 496 contribute to the ATP site. Residues proline 526–methionine 546 form a disordered region. The segment covering alanine 532 to methionine 546 has biased composition (gly residues).

It belongs to the chaperonin (HSP60) family. As to quaternary structure, forms a cylinder of 14 subunits composed of two heptameric rings stacked back-to-back. Interacts with the co-chaperonin GroES.

The protein localises to the cytoplasm. It catalyses the reaction ATP + H2O + a folded polypeptide = ADP + phosphate + an unfolded polypeptide.. Its function is as follows. Together with its co-chaperonin GroES, plays an essential role in assisting protein folding. The GroEL-GroES system forms a nano-cage that allows encapsulation of the non-native substrate proteins and provides a physical environment optimized to promote and accelerate protein folding. The polypeptide is Chaperonin GroEL (Ruegeria pomeroyi (strain ATCC 700808 / DSM 15171 / DSS-3) (Silicibacter pomeroyi)).